Consider the following 143-residue polypeptide: Ribonuclease H (143 aa).

Positions 1 to 141 (MKHVEIFTDG…VDKLASDAAL (141 aa)) constitute an RNase H type-1 domain. The Mg(2+) site is built by Asp-9, Glu-47, Asp-69, and Asp-133.

This sequence belongs to the RNase H family. Monomer. It depends on Mg(2+) as a cofactor.

It localises to the cytoplasm. The catalysed reaction is Endonucleolytic cleavage to 5'-phosphomonoester.. Endonuclease that specifically degrades the RNA of RNA-DNA hybrids. The protein is Ribonuclease H of Novosphingobium aromaticivorans (strain ATCC 700278 / DSM 12444 / CCUG 56034 / CIP 105152 / NBRC 16084 / F199).